The following is a 410-amino-acid chain: Arginine biosynthesis bifunctional protein ArgJ (410 aa).

Residues Thr160, Lys186, Thr197, Glu283, Asn405, and Thr410 each coordinate substrate. Catalysis depends on Thr197, which acts as the Nucleophile.

Belongs to the ArgJ family. As to quaternary structure, heterotetramer of two alpha and two beta chains.

It localises to the cytoplasm. The catalysed reaction is N(2)-acetyl-L-ornithine + L-glutamate = N-acetyl-L-glutamate + L-ornithine. The enzyme catalyses L-glutamate + acetyl-CoA = N-acetyl-L-glutamate + CoA + H(+). It functions in the pathway amino-acid biosynthesis; L-arginine biosynthesis; L-ornithine and N-acetyl-L-glutamate from L-glutamate and N(2)-acetyl-L-ornithine (cyclic): step 1/1. Its pathway is amino-acid biosynthesis; L-arginine biosynthesis; N(2)-acetyl-L-ornithine from L-glutamate: step 1/4. Catalyzes two activities which are involved in the cyclic version of arginine biosynthesis: the synthesis of N-acetylglutamate from glutamate and acetyl-CoA as the acetyl donor, and of ornithine by transacetylation between N(2)-acetylornithine and glutamate. This Geobacillus kaustophilus (strain HTA426) protein is Arginine biosynthesis bifunctional protein ArgJ.